The following is a 72-amino-acid chain: Conotoxin Vc6.16 (72 aa).

A signal peptide spans 1–19 (MQKLIILLLVAAVLMSTQA). Positions 20–44 (LFQEKRPKEKIDLLSKRKTDAEKQQ) are excised as a propeptide. Disulfide bonds link Cys48-Cys62, Cys55-Cys66, and Cys61-Cys71.

Belongs to the conotoxin O2 superfamily. In terms of tissue distribution, expressed by the venom duct.

The protein localises to the secreted. In terms of biological role, inhibits voltage-gated ion channels. The protein is Conotoxin Vc6.16 of Conus victoriae (Queen Victoria cone).